Consider the following 143-residue polypeptide: Hemoglobin cathodic subunit alpha (143 aa).

N-acetylserine is present on Ser-2. A Globin domain is found at Ser-2–Arg-143. His-59 provides a ligand contact to O2. Position 89 (His-89) interacts with heme b.

The protein belongs to the globin family. In terms of assembly, heterotetramer of two alpha chains and two beta chains. Red blood cells.

Involved in oxygen transport from the gills to the various peripheral tissues. In Conger conger (Conger eel), this protein is Hemoglobin cathodic subunit alpha.